We begin with the raw amino-acid sequence, 408 residues long: LL-diaminopimelate aminotransferase (408 aa).

The substrate site is built by Y15 and G42. Pyridoxal 5'-phosphate contacts are provided by residues Y72, 108 to 109 (SK), Y132, N187, Y218, and 246 to 248 (SFS). The substrate site is built by K109, Y132, and N187. K249 bears the N6-(pyridoxal phosphate)lysine mark. Pyridoxal 5'-phosphate-binding residues include R257 and N292. N292 and R388 together coordinate substrate.

The protein belongs to the class-I pyridoxal-phosphate-dependent aminotransferase family. LL-diaminopimelate aminotransferase subfamily. As to quaternary structure, homodimer. The cofactor is pyridoxal 5'-phosphate.

The catalysed reaction is (2S,6S)-2,6-diaminopimelate + 2-oxoglutarate = (S)-2,3,4,5-tetrahydrodipicolinate + L-glutamate + H2O + H(+). Its pathway is amino-acid biosynthesis; L-lysine biosynthesis via DAP pathway; LL-2,6-diaminopimelate from (S)-tetrahydrodipicolinate (aminotransferase route): step 1/1. In terms of biological role, involved in the synthesis of meso-diaminopimelate (m-DAP or DL-DAP), required for both lysine and peptidoglycan biosynthesis. Catalyzes the direct conversion of tetrahydrodipicolinate to LL-diaminopimelate. The protein is LL-diaminopimelate aminotransferase of Synechococcus sp. (strain WH7803).